Here is a 189-residue protein sequence, read N- to C-terminus: Small ribosomal subunit protein uS7 (189 aa).

The protein belongs to the universal ribosomal protein uS7 family. In terms of assembly, component of the small ribosomal subunit.

The protein localises to the cytoplasm. The polypeptide is Small ribosomal subunit protein uS7 (RPS5) (Encephalitozoon cuniculi (strain GB-M1) (Microsporidian parasite)).